The primary structure comprises 102 residues: uncharacterized protein (102 aa).

The next 2 membrane-spanning stretches (helical) occupy residues 24–44 (AFIV…PVLT) and 55–75 (IGAV…TWIL).

The protein resides in the cell membrane. This is an uncharacterized protein from Bacillus subtilis (strain 168).